A 747-amino-acid chain; its full sequence is ESX-1 secretion system protein EccCa1 (747 aa).

The next 3 membrane-spanning stretches (helical) occupy residues 41–61 (ILPYVMGGAMLGMIAIMVAGG), 65–85 (LSPYMLMMPLMMIVMMVGGLA), and 222–242 (FPTIAIGGDLAGAAGLMTAMI). One can recognise a FtsK domain in the interval 456 to 665 (GNVMYLDIKE…LRTTSSHESK (210 aa)). Position 479–486 (479–486 (GTTGSGKS)) interacts with ATP.

As to quaternary structure, part of the ESX-1 / type VII secretion system (T7SS), which is composed of cytosolic and membrane components. The ESX-1 membrane complex is composed of EccB1, EccCa1, EccCb1, EccD1 and EccE1.

The protein resides in the cell inner membrane. In terms of biological role, part of the ESX-1 specialized secretion system, which delivers several virulence factors to host cells during infection, including the key virulence factors EsxA (ESAT-6) and EsxB (CFP-10). The sequence is that of ESX-1 secretion system protein EccCa1 from Mycobacterium tuberculosis (strain CDC 1551 / Oshkosh).